Reading from the N-terminus, the 375-residue chain is Succinyl-diaminopimelate desuccinylase (375 aa).

A Zn(2+)-binding site is contributed by His66. Residue Asp68 is part of the active site. Position 99 (Asp99) interacts with Zn(2+). Glu133 serves as the catalytic Proton acceptor. The Zn(2+) site is built by Glu134, Glu162, and His348.

This sequence belongs to the peptidase M20A family. DapE subfamily. In terms of assembly, homodimer. It depends on Zn(2+) as a cofactor. Requires Co(2+) as cofactor.

It carries out the reaction N-succinyl-(2S,6S)-2,6-diaminopimelate + H2O = (2S,6S)-2,6-diaminopimelate + succinate. The protein operates within amino-acid biosynthesis; L-lysine biosynthesis via DAP pathway; LL-2,6-diaminopimelate from (S)-tetrahydrodipicolinate (succinylase route): step 3/3. Functionally, catalyzes the hydrolysis of N-succinyl-L,L-diaminopimelic acid (SDAP), forming succinate and LL-2,6-diaminopimelate (DAP), an intermediate involved in the bacterial biosynthesis of lysine and meso-diaminopimelic acid, an essential component of bacterial cell walls. The protein is Succinyl-diaminopimelate desuccinylase of Shigella flexneri serotype 5b (strain 8401).